A 230-amino-acid polypeptide reads, in one-letter code: Osmotin-like protein PR-5x (230 aa).

An N-terminal signal peptide occupies residues 1–25 (MYTNMGYLTSSFIFFFLALVTYTYA). Intrachain disulfides connect Cys-34–Cys-229, Cys-76–Cys-86, Cys-91–Cys-97, Cys-145–Cys-217, Cys-150–Cys-200, Cys-158–Cys-168, Cys-172–Cys-181, and Cys-182–Cys-187.

The protein belongs to the thaumatin family.

It localises to the secreted. Its subcellular location is the vacuole. The catalysed reaction is Endohydrolysis of (1-&gt;3)- or (1-&gt;4)-linkages in beta-D-glucans when the glucose residue whose reducing group is involved in the linkage to be hydrolyzed is itself substituted at C-3.. In terms of biological role, antifungal protein. May bind to beta-glucans and have beta-1,3-D-glucanase activity. The protein is Osmotin-like protein PR-5x of Solanum lycopersicum (Tomato).